An 887-amino-acid polypeptide reads, in one-letter code: Tiger protein O1 (887 aa).

An N-terminal signal peptide occupies residues 1–21; sequence MEKKLLIIVIVFLFSTIQVFC. Over 22 to 845 the chain is Extracellular; the sequence is RIDDKTFVIS…SLSKKSIILL (824 aa). N32, N70, N186, N207, N219, N259, N297, N314, N325, N338, N354, N393, N431, N588, N629, N652, N687, N710, N720, N730, N775, N788, N811, and N816 each carry an N-linked (GlcNAc...) asparagine glycan. Residues 277–365 enclose the IPT/TIG 1 domain; sequence NSVPYSKGGL…TNENKLLFNY (89 aa). Residues 710-767 enclose the IPT/TIG 2 domain; the sequence is NTSSINVNGGNLTIYGKNFYNVSNIKVEVDNQLKCNKIEFINLNSLTCFLPPFIETLF. The segment at 811–835 is disordered; the sequence is NDTSENSTNDILNHEKNNNNQKDGS. Residues 846 to 866 form a helical membrane-spanning segment; sequence SILLPSFIILIVSLAIVILVI. Over 867 to 887 the chain is Cytoplasmic; that stretch reads KRNKTKHSKNMSSKEKELMKQ.

Its subcellular location is the membrane. In Dictyostelium discoideum (Social amoeba), this protein is Tiger protein O1 (tgrO1).